Consider the following 200-residue polypeptide: MSNQTNKAQDNQVEEIVEGELLNENATEATDEASLMDELTQANFRVEELEKALQEAEAKVDAQKDSVIRAAAEVDNIRRRSAMDVEKAHKFALEKFINELLPVLDNMERALQGTDAEAEATKAIYEGVELTAKSFMSTVEKFGLVQVDPQGDTFNPELHQAIGMQPSADFPANTVMMVMQKGYTLNERLLRPAMVMVSQG.

The segment covering 1–11 (MSNQTNKAQDN) has biased composition (polar residues). Residues 1 to 25 (MSNQTNKAQDNQVEEIVEGELLNEN) form a disordered region.

It belongs to the GrpE family. As to quaternary structure, homodimer.

Its subcellular location is the cytoplasm. Functionally, participates actively in the response to hyperosmotic and heat shock by preventing the aggregation of stress-denatured proteins, in association with DnaK and GrpE. It is the nucleotide exchange factor for DnaK and may function as a thermosensor. Unfolded proteins bind initially to DnaJ; upon interaction with the DnaJ-bound protein, DnaK hydrolyzes its bound ATP, resulting in the formation of a stable complex. GrpE releases ADP from DnaK; ATP binding to DnaK triggers the release of the substrate protein, thus completing the reaction cycle. Several rounds of ATP-dependent interactions between DnaJ, DnaK and GrpE are required for fully efficient folding. This chain is Protein GrpE, found in Shewanella pealeana (strain ATCC 700345 / ANG-SQ1).